The chain runs to 78 residues: Large ribosomal subunit protein bL28 (78 aa).

Positions 1-20 are disordered; the sequence is MSRVCQVTGKRPVTGNNRSH.

This sequence belongs to the bacterial ribosomal protein bL28 family.

This Photobacterium profundum (strain SS9) protein is Large ribosomal subunit protein bL28.